The following is a 403-amino-acid chain: Argininosuccinate synthase (403 aa).

ATP contacts are provided by residues 12 to 20 and A39; that span reads AYSGGLDTS. Residues Y91 and S96 each coordinate L-citrulline. Residue G121 coordinates ATP. Positions 123, 127, and 128 each coordinate L-aspartate. Residue N127 coordinates L-citrulline. L-citrulline is bound by residues R131, S180, S189, E265, and Y277.

Belongs to the argininosuccinate synthase family. Type 1 subfamily. In terms of assembly, homotetramer.

The protein resides in the cytoplasm. It carries out the reaction L-citrulline + L-aspartate + ATP = 2-(N(omega)-L-arginino)succinate + AMP + diphosphate + H(+). It participates in amino-acid biosynthesis; L-arginine biosynthesis; L-arginine from L-ornithine and carbamoyl phosphate: step 2/3. The chain is Argininosuccinate synthase from Vibrio vulnificus (strain CMCP6).